Here is a 459-residue protein sequence, read N- to C-terminus: Cysteine--tRNA ligase (459 aa).

Residue Cys31 coordinates Zn(2+). The 'HIGH' region motif lies at 33-43 (PTVYYNPHIGN). Zn(2+) is bound by residues Cys216, His241, and Glu245. Residues 274-278 (KMSKS) carry the 'KMSKS' region motif. Lys277 provides a ligand contact to ATP.

Belongs to the class-I aminoacyl-tRNA synthetase family. In terms of assembly, monomer. It depends on Zn(2+) as a cofactor.

The protein resides in the cytoplasm. The enzyme catalyses tRNA(Cys) + L-cysteine + ATP = L-cysteinyl-tRNA(Cys) + AMP + diphosphate. This chain is Cysteine--tRNA ligase, found in Rickettsia africae (strain ESF-5).